The following is a 101-amino-acid chain: Non-histone chromosomal protein HMG-14 (101 aa).

The segment at 1–101 (MPKRKVSSAE…EAEEKEAKSD (101 aa)) is disordered. ADP-ribosylserine is present on Ser7. Ser8 is modified (phosphoserine). Lys14 carries the N6-acetyllysine modification. Ser21 bears the Phosphoserine mark. An ADP-ribosylserine; alternate modification is found at Ser25. Residue Ser25 is modified to Phosphoserine; alternate. The residue at position 27 (Lys27) is an N6-acetyllysine. Basic and acidic residues-rich tracts occupy residues 33–51 (VETK…DKKV) and 70–86 (ETKE…KNEE). A Phosphothreonine modification is found at Thr82. N6-acetyllysine is present on Lys83. Ser87, Ser90, and Ser100 each carry phosphoserine.

The protein belongs to the HMGN family. As to quaternary structure, interacts with transcriptional regulator SEHBP. In terms of processing, phosphorylation on Ser-21 and Ser-25 weakens binding to nucleosomes and increases the rate of H3 phosphorylation.

The protein resides in the nucleus. Functionally, binds to the inner side of the nucleosomal DNA thus altering the interaction between the DNA and the histone octamer. May be involved in the process which maintains transcribable genes in a unique chromatin conformation. Inhibits the phosphorylation of nucleosomal histones H3 and H2A by RPS6KA5/MSK1 and RPS6KA3/RSK2. The protein is Non-histone chromosomal protein HMG-14 (HMGN1) of Bos taurus (Bovine).